A 360-amino-acid chain; its full sequence is MNATEVTDTTQDETVYNSYYFYESMPKPCTKEGIKAFGEVFLPPLYSLVFLLGLFGNSVVVLVLFKYKRLKSMTDVYLLNLAISDLLFVLSLPFWGYYAADQWVFGLGLCKIVSWMYLVGFYSGIFFIMLMSIDRYLAIVHAVFSLKARTLTYGVITSLITWSVAVFASLPGLLFSTCYTEHNHTYCKTQYSVNSTTWKVLSSLEINVLGLLIPLGIMLFCYSMIIRTLQHCKNEKKNRAVRMIFAVVVLFLGFWTPYNVVLFLETLVELEVLQDCTLERYLDYAIQATETLAFIHCCLNPVIYFFLGEKFRKYITQLFRTCRGPLVLCKHCDFLQVYSADMSSSSYTQSTVDHDFRDAL.

Residues 1 to 39 lie on the Extracellular side of the membrane; the sequence is MNATEVTDTTQDETVYNSYYFYESMPKPCTKEGIKAFGE. An N-linked (GlcNAc...) asparagine glycan is attached at asparagine 2. Residues 40 to 67 form a helical membrane-spanning segment; sequence VFLPPLYSLVFLLGLFGNSVVVLVLFKY. At 68–77 the chain is on the cytoplasmic side; it reads KRLKSMTDVY. The chain crosses the membrane as a helical span at residues 78 to 98; the sequence is LLNLAISDLLFVLSLPFWGYY. The Extracellular segment spans residues 99-111; it reads AADQWVFGLGLCK. A disulfide bridge links cysteine 110 with cysteine 187. A helical membrane pass occupies residues 112-133; the sequence is IVSWMYLVGFYSGIFFIMLMSI. The Cytoplasmic segment spans residues 134–150; the sequence is DRYLAIVHAVFSLKART. Residues 151–175 traverse the membrane as a helical segment; sequence LTYGVITSLITWSVAVFASLPGLLF. Topologically, residues 176–206 are extracellular; the sequence is STCYTEHNHTYCKTQYSVNSTTWKVLSSLEI. N-linked (GlcNAc...) asparagine glycosylation is found at asparagine 183 and asparagine 194. The helical transmembrane segment at 207 to 226 threads the bilayer; that stretch reads NVLGLLIPLGIMLFCYSMII. The Cytoplasmic segment spans residues 227 to 242; the sequence is RTLQHCKNEKKNRAVR. The helical transmembrane segment at 243-267 threads the bilayer; sequence MIFAVVVLFLGFWTPYNVVLFLETL. The Extracellular portion of the chain corresponds to 268-284; the sequence is VELEVLQDCTLERYLDY. Residues 285-308 form a helical membrane-spanning segment; sequence AIQATETLAFIHCCLNPVIYFFLG. Residues 309–360 are Cytoplasmic-facing; that stretch reads EKFRKYITQLFRTCRGPLVLCKHCDFLQVYSADMSSSSYTQSTVDHDFRDAL.

This sequence belongs to the G-protein coupled receptor 1 family. In terms of processing, in natural killer cells, CCL22 binding induces phosphorylation on yet undefined Ser/Thr residues, most probably by beta-adrenergic receptor kinases 1 and 2. In terms of tissue distribution, expressed in the thymus, macrophages and T- and B-cells.

The protein localises to the cell membrane. In terms of biological role, high affinity receptor for the C-C type chemokines CCL17/TARC and CCL22/MDC. The activity of this receptor is mediated by G(i) proteins which activate a phosphatidylinositol-calcium second messenger system. Could play a role in lipopolysaccharide (LPS)-induced endotoxic shock. In the CNS, could mediate hippocampal-neuron survival. This chain is C-C chemokine receptor type 4 (Ccr4), found in Mus musculus (Mouse).